The primary structure comprises 144 residues: Transmembrane protein 170A (144 aa).

Residues 1–50 (MEREGSGGSGGSAGLLQQILSLKVVPRVGNGTLCPNSTSLCSFPEMWYGV) lie on the Lumenal side of the membrane. Residues Asn30 and Asn36 are each glycosylated (N-linked (GlcNAc...) asparagine). A helical transmembrane segment spans residues 51-71 (FLWALVSSLFFHVPAGLLALF). Topologically, residues 72-85 (TLRHHKYGRFMSVS) are cytoplasmic. A helical membrane pass occupies residues 86–106 (ILLMGIVGPITAGILTSAAIA). Residues 107 to 116 (GVYRAAGKEM) are Lumenal-facing. Residues 117-137 (IPFEALTLGTGQTFCVLVVSF) traverse the membrane as a helical segment. Residues 138–144 (LRILATL) lie on the Cytoplasmic side of the membrane.

This sequence belongs to the TMEM170 family. Interacts with RTN4.

Its subcellular location is the endoplasmic reticulum membrane. The protein localises to the nucleus envelope. Its function is as follows. Acts as a regulator of endoplasmic reticulum (ER) and nuclear envelope (NE) morphogenesis. Affects the ratio between tubular ER and ER sheets by promoting sheet formation at the expense of tubules. Influences NE expansion, nuclear pore complex formation and proper localization of inner nuclear membrane proteins. The protein is Transmembrane protein 170A (TMEM170A) of Homo sapiens (Human).